The sequence spans 620 residues: Putative ribonuclease H protein At1g65750 (620 aa).

The 131-residue stretch at 456 to 586 folds into the RNase H type-1 domain; it reads CVGWVKVNTD…ADGLANYAFS (131 aa). Mg(2+) is bound by residues aspartate 465, glutamate 505, aspartate 529, and aspartate 578.

Mg(2+) is required as a cofactor.

It catalyses the reaction Endonucleolytic cleavage to 5'-phosphomonoester.. The sequence is that of Putative ribonuclease H protein At1g65750 from Arabidopsis thaliana (Mouse-ear cress).